The sequence spans 437 residues: Palmitoyltransferase PFA4 (437 aa).

The Cytoplasmic segment spans residues 1-12; sequence MAGLNDVPFIKG. Residues 13–33 traverse the membrane as a helical segment; it reads LAVPSVCALIIFLGYASQFLF. Residues 34–48 lie on the Lumenal side of the membrane; sequence NYSTTLEPGPPTRRE. The helical transmembrane segment at 49-69 threads the bilayer; it reads TIIFNGLLLVLWITYYRTVAT. Topologically, residues 70 to 130 are cytoplasmic; it reads DPGRYIFKDR…RNCVSMTTFP (61 aa). The 51-residue stretch at 87-137 folds into the DHHC domain; the sequence is RWCNKCAAPKPPRAHHCRHCARCVPRMDHHCPWTRNCVSMTTFPHFLRFLI. Cysteine 117 (S-palmitoyl cysteine intermediate) is an active-site residue. The chain crosses the membrane as a helical span at residues 131 to 151; sequence HFLRFLIYTNMSLWMLGYFLW. The Lumenal segment spans residues 152-173; it reads QRFSKIWEHRRLPAYLGPSFYG. Residues 174-194 form a helical membrane-spanning segment; sequence LICLSLISIVNFVTTVALGIM. Residues 195 to 437 are Cytoplasmic-facing; the sequence is LINTVKSWVF…KILKKDGLDD (243 aa). The segment at 377–419 is disordered; it reads LDQGLGWVNSDGDRLRDYGVDEEASEPEGVNDDDDDDDDDDVP. The span at 396 to 419 shows a compositional bias: acidic residues; the sequence is VDEEASEPEGVNDDDDDDDDDDVP.

It belongs to the DHHC palmitoyltransferase family. PFA4 subfamily.

It is found in the endoplasmic reticulum membrane. It catalyses the reaction L-cysteinyl-[protein] + hexadecanoyl-CoA = S-hexadecanoyl-L-cysteinyl-[protein] + CoA. Functionally, mediates the reversible addition of palmitate to target proteins, thereby regulating their membrane association and biological function. The chain is Palmitoyltransferase PFA4 from Gibberella zeae (strain ATCC MYA-4620 / CBS 123657 / FGSC 9075 / NRRL 31084 / PH-1) (Wheat head blight fungus).